The chain runs to 905 residues: Heme/hemopexin-binding protein (905 aa).

An N-terminal signal peptide occupies residues 1–21; sequence MYKLNVISLIILTTYTGATYA.

The protein resides in the secreted. Functionally, binds heme/hemopexin complexes. In Haemophilus influenzae (strain ATCC 51907 / DSM 11121 / KW20 / Rd), this protein is Heme/hemopexin-binding protein (hxuA).